Here is a 433-residue protein sequence, read N- to C-terminus: WD repeat domain phosphoinositide-interacting protein 1 (433 aa).

Residues 127–132 (LLKTLL) carry the Nuclear receptor interaction motif. WD repeat units lie at residues 136–177 (RNPH…CECT) and 180–220 (AHDS…KLYE). The L/FRRG motif signature appears at 221 to 224 (FRRG). WD repeat units follow at residues 226–265 (KRYV…ERSE) and 296–346 (DRAF…GGEC).

The protein belongs to the WD repeat PROPPIN family.

The protein resides in the golgi apparatus. It is found in the trans-Golgi network. Its subcellular location is the endosome. The protein localises to the cytoplasmic vesicle. It localises to the clathrin-coated vesicle. The protein resides in the preautophagosomal structure membrane. It is found in the cytoplasm. Its subcellular location is the cytoskeleton. Functionally, component of the autophagy machinery that controls the major intracellular degradation process by which cytoplasmic materials are packaged into autophagosomes and delivered to lysosomes for degradation. Plays an important role in starvation- and calcium-mediated autophagy, as well as in mitophagy. Functions downstream of the ulk1 and PI3-kinases that produce phosphatidylinositol 3-phosphate (PtdIns3P) on membranes of the endoplasmic reticulum once activated. Binds phosphatidylinositol 3-phosphate (PtdIns3P), and maybe other phosphoinositides including PtdIns3,5P2 and PtdIns5P, and is recruited to phagophore assembly sites at the endoplasmic reticulum membranes. There, it assists wipi2 in the recruitment of atg12-atg5-atg16l1, a complex that directly controls the elongation of the nascent autophagosomal membrane. Together with wdr45/wipi4, promotes atg2 (atg2a or atg2b)-mediated lipid transfer by enhancing atg2-association with phosphatidylinositol 3-monophosphate (PI3P)-containing membranes. In Xenopus laevis (African clawed frog), this protein is WD repeat domain phosphoinositide-interacting protein 1 (wipi1).